Consider the following 164-residue polypeptide: Transcription antitermination protein NusB (164 aa).

The protein belongs to the NusB family.

Involved in transcription antitermination. Required for transcription of ribosomal RNA (rRNA) genes. Binds specifically to the boxA antiterminator sequence of the ribosomal RNA (rrn) operons. This chain is Transcription antitermination protein NusB, found in Mycolicibacterium gilvum (strain PYR-GCK) (Mycobacterium gilvum (strain PYR-GCK)).